A 202-amino-acid chain; its full sequence is Outer-membrane lipoprotein carrier protein (202 aa).

The signal sequence occupies residues 1–21 (MKRLLVACCFLSGLISASALA).

It belongs to the LolA family. As to quaternary structure, monomer.

It localises to the periplasm. Participates in the translocation of lipoproteins from the inner membrane to the outer membrane. Only forms a complex with a lipoprotein if the residue after the N-terminal Cys is not an aspartate (The Asp acts as a targeting signal to indicate that the lipoprotein should stay in the inner membrane). The protein is Outer-membrane lipoprotein carrier protein of Yersinia pestis bv. Antiqua (strain Antiqua).